The following is a 101-amino-acid chain: Small ribosomal subunit protein uS14 (101 aa).

The tract at residues 46–72 (FELNRQPRDASPVRVRNRDSRDGRPRG) is disordered. Over residues 61 to 70 (RNRDSRDGRP) the composition is skewed to basic and acidic residues.

The protein belongs to the universal ribosomal protein uS14 family. In terms of assembly, part of the 30S ribosomal subunit. Contacts proteins S3 and S10.

Binds 16S rRNA, required for the assembly of 30S particles and may also be responsible for determining the conformation of the 16S rRNA at the A site. This chain is Small ribosomal subunit protein uS14, found in Corynebacterium diphtheriae (strain ATCC 700971 / NCTC 13129 / Biotype gravis).